Reading from the N-terminus, the 448-residue chain is Cysteine--tRNA ligase (448 aa).

Cys29 provides a ligand contact to Zn(2+). A 'HIGH' region motif is present at residues 31-41; the sequence is PTVYDTAHIGN. Over residues 79-91 the composition is skewed to basic and acidic residues; it reads ATTGADRGADQAH. The segment at 79-106 is disordered; that stretch reads ATTGADRGADQAHRGPLPRRHGPLNAAP. Residues Cys206 and Glu235 each contribute to the Zn(2+) site. The 'KMSKS' region motif lies at 265 to 269; sequence RMSKS. Lys268 lines the ATP pocket.

This sequence belongs to the class-I aminoacyl-tRNA synthetase family. As to quaternary structure, monomer. It depends on Zn(2+) as a cofactor.

The protein localises to the cytoplasm. It catalyses the reaction tRNA(Cys) + L-cysteine + ATP = L-cysteinyl-tRNA(Cys) + AMP + diphosphate. The polypeptide is Cysteine--tRNA ligase (cysS) (Azospirillum brasilense).